The primary structure comprises 340 residues: Oxygen-dependent coproporphyrinogen-III oxidase (340 aa).

Positions 1–14 are enriched in polar residues; sequence MTVSPTTQPQTNHS. A disordered region spans residues 1-22; the sequence is MTVSPTTQPQTNHSLPPADAKQ. Substrate is bound at residue S109. A divalent metal cation is bound by residues H113 and H123. The active-site Proton donor is the H123. Residue 125–127 coordinates substrate; the sequence is NYR. H157 and H187 together coordinate a divalent metal cation. Residues 278-313 form an important for dimerization region; sequence YVEFNLVYDRGTIFGLQTNGRTESILMSLPPLVRWQ. Residue 296 to 298 coordinates substrate; it reads NGR.

This sequence belongs to the aerobic coproporphyrinogen-III oxidase family. Homodimer. It depends on a divalent metal cation as a cofactor.

Its subcellular location is the cytoplasm. It carries out the reaction coproporphyrinogen III + O2 + 2 H(+) = protoporphyrinogen IX + 2 CO2 + 2 H2O. The protein operates within porphyrin-containing compound metabolism; protoporphyrin-IX biosynthesis; protoporphyrinogen-IX from coproporphyrinogen-III (O2 route): step 1/1. Its function is as follows. Involved in the heme and chlorophyll biosynthesis. Catalyzes the aerobic oxidative decarboxylation of propionate groups of rings A and B of coproporphyrinogen-III to yield the vinyl groups in protoporphyrinogen-IX. This Synechocystis sp. (strain ATCC 27184 / PCC 6803 / Kazusa) protein is Oxygen-dependent coproporphyrinogen-III oxidase.